Here is a 362-residue protein sequence, read N- to C-terminus: Dihydroorotate dehydrogenase (quinone) (362 aa).

FMN-binding positions include 62–66 and T86; that span reads AGYDK. K66 is a substrate binding site. Substrate is bound at residue 111-115; the sequence is NRLGF. Positions 139 and 170 each coordinate FMN. N170 provides a ligand contact to substrate. S173 functions as the Nucleophile in the catalytic mechanism. N175 is a binding site for substrate. FMN contacts are provided by K215 and S243. Substrate is bound at residue 244 to 245; the sequence is NT. FMN contacts are provided by residues G266, G295, and 316-317; that span reads YS.

This sequence belongs to the dihydroorotate dehydrogenase family. Type 2 subfamily. As to quaternary structure, monomer. FMN serves as cofactor.

It is found in the cell membrane. It carries out the reaction (S)-dihydroorotate + a quinone = orotate + a quinol. It functions in the pathway pyrimidine metabolism; UMP biosynthesis via de novo pathway; orotate from (S)-dihydroorotate (quinone route): step 1/1. Catalyzes the conversion of dihydroorotate to orotate with quinone as electron acceptor. This chain is Dihydroorotate dehydrogenase (quinone), found in Rhizobium etli (strain ATCC 51251 / DSM 11541 / JCM 21823 / NBRC 15573 / CFN 42).